The following is a 160-amino-acid chain: Phosphopantetheine adenylyltransferase (160 aa).

Position 9 (Ser-9) interacts with substrate. Residues 9–10 (SF) and His-17 each bind ATP. Substrate contacts are provided by Lys-41, Leu-73, and Arg-87. ATP contacts are provided by residues 88–90 (GLR), Glu-98, and 123–129 (YTFLSSS).

The protein belongs to the bacterial CoaD family. As to quaternary structure, homohexamer. It depends on Mg(2+) as a cofactor.

It is found in the cytoplasm. The catalysed reaction is (R)-4'-phosphopantetheine + ATP + H(+) = 3'-dephospho-CoA + diphosphate. The protein operates within cofactor biosynthesis; coenzyme A biosynthesis; CoA from (R)-pantothenate: step 4/5. Functionally, reversibly transfers an adenylyl group from ATP to 4'-phosphopantetheine, yielding dephospho-CoA (dPCoA) and pyrophosphate. This is Phosphopantetheine adenylyltransferase from Dictyoglomus turgidum (strain DSM 6724 / Z-1310).